Consider the following 238-residue polypeptide: N-acetylneuraminic acid outer membrane channel protein NanC (238 aa).

Positions 1–23 (MKKAKILSGVLLLCFSSPLISQA) are cleaved as a signal peptide. Residues 24-25 (AT) are Periplasmic-facing. Over 26-32 (LDVRGGY) the chain traverses the membrane. At 33–39 (RSGSHAY) the chain is on the extracellular side. Over 40–49 (ETRLKVSEGW) the chain traverses the membrane. Over 50–52 (QNG) the chain is Periplasmic. The segment at 53-61 (WWASMESNT) is a transmembrane helix. The Extracellular portion of the chain corresponds to 62–76 (WNTIHDNKKENAALN). The segment at 77-86 (DVQVEVNYAI) is a transmembrane helix. Topologically, residues 87 to 91 (KLDDQ) are periplasmic. Positions 92 to 102 (WTVRPGMLTHF) form a transmembrane segment. Topologically, residues 103–107 (SSNGT) are extracellular. Positions 108–117 (RYGPYVKLSW) form a transmembrane segment. At 118 to 122 (DATKD) the chain is on the periplasmic side. Residues 123–132 (LNFGIRYRYD) are membrane-embedded. Over 133–151 (WKAYRQQDLSGDMSRDNVH) the chain is Extracellular. Over 152–159 (RWDGYVTY) the chain traverses the membrane. Topologically, residues 160–164 (HINSD) are periplasmic. A transmembrane helix spans residues 165–173 (FTFAWQTTL). Residues 174–190 (YSKQNDYRYANHKKWAT) are Extracellular-facing. A membrane pass occupies residues 191 to 200 (ENAFVLQYHM). Over 201 to 203 (TPD) the chain is Periplasmic. The hydrophobic stretch at 204 to 212 (ITPYIEYDY) threads the membrane. Over 213 to 228 (LDRQGVYNGRDNLSEN) the chain is Extracellular. Positions 229 to 236 (SYRIGVSF) form a transmembrane segment. Topologically, residues 237 to 238 (KL) are periplasmic.

It belongs to the oligogalacturonate-specific porin KdgM (TC 1.B.35) family. NanC subfamily. As to quaternary structure, monomer.

Its subcellular location is the cell outer membrane. The catalysed reaction is N-acetylneuraminate(in) = N-acetylneuraminate(out). Its function is as follows. Outer membrane channel protein allowing the entry of N-acetylneuraminic acid (Neu5Ac, the most abundant sialic acid on host cell surfaces) into the bacteria. NanC proteins form high-conductance channels which are open at low membrane potentials and which have a weak anion selectivity. The sequence is that of N-acetylneuraminic acid outer membrane channel protein NanC (nanC) from Escherichia coli O157:H7.